Here is a 98-residue protein sequence, read N- to C-terminus: Growth-regulated protein homolog gamma (98 aa).

An N-terminal signal peptide occupies residues 1–29; it reads MAPAASSAPRLLRAAMLLLLLVAAGRRAA. 2 cysteine pairs are disulfide-bonded: cysteine 39–cysteine 65 and cysteine 41–cysteine 81.

Belongs to the intercrine alpha (chemokine CxC) family.

Its subcellular location is the secreted. The sequence is that of Growth-regulated protein homolog gamma from Bos taurus (Bovine).